Here is a 283-residue protein sequence, read N- to C-terminus: BTB/POZ domain-containing protein KCTD15 (283 aa).

Residues 1-32 (MPHRKERPSGSSLHTHGSTGTAEGGNMSRLSL) are disordered. Residues 9–21 (SGSSLHTHGSTGT) show a composition bias toward low complexity. A phosphoserine mark is found at S31, S35, and S38. The BTB domain occupies 56 to 126 (APVHIDVGGH…LRTSKLLLPD (71 aa)).

In terms of assembly, forms oligomers, predominantly homopentamers. Interacts with KCTD1, probably forming heteropentamers depending on its abundance in a cell-type dependent manner. Interacts with TFAP2A; this interaction inhibits TFAP2A transcriptional activation.

It localises to the nucleus. Its function is as follows. During embryonic development, it is involved in neural crest formation. Inhibits AP2 transcriptional activity by interaction with its activation domain. In Homo sapiens (Human), this protein is BTB/POZ domain-containing protein KCTD15 (KCTD15).